Consider the following 417-residue polypeptide: Inactive GDSL esterase/lipase-like protein 25 (417 aa).

Residues 1–50 (MLLIPSFTANSNEPPPSKLSLSDLSMAILKSHFFLLFPLLLLHFHTVSFA) form the signal peptide. N-linked (GlcNAc...) asparagine glycans are attached at residues Asn160, Asn308, and Asn311. His331 is an active-site residue.

This sequence belongs to the 'GDSL' lipolytic enzyme family. Interacts with the PYK10 complex and TGG2, but not with TGG1 or PEN2. In terms of tissue distribution, expressed throughout the seedling, rosette leaves, roots, inflorescence and imbibed seed, but not in pollen.

It is found in the vacuole. Its subcellular location is the endoplasmic reticulum. Involved in organization of the endomembrane system and is required for endoplasmic reticulum morphology and organelle distribution. May act by inhibiting the formation of PYK10 complex by binding to GLL23 and exporting it from the ER. Required for proper subcellular localization of myrosinase TGG2. Has no lipase or esterase activity. The protein is Inactive GDSL esterase/lipase-like protein 25 (MVP1) of Arabidopsis thaliana (Mouse-ear cress).